The sequence spans 220 residues: Phosphopantothenoylcysteine decarboxylase (220 aa).

FMN is bound by residues 29 to 31 and 54 to 56; these read GSV and TKA. His-91 (proton donor) is an active-site residue. FMN is bound by residues 107 to 110 and Ala-141; that span reads SANT. Positions 143, 173, and 175 each coordinate N-[(R)-4-phosphopantothenoyl]-L-cysteine. Residue Cys-176 is the Proton donor of the active site. Met-184 is a binding site for N-[(R)-4-phosphopantothenoyl]-L-cysteine.

Belongs to the HFCD (homooligomeric flavin containing Cys decarboxylase) superfamily. Forms homotrimers. Interacts with HIP1. Interacts with HD1 in the dark. Requires FMN as cofactor. Expressed in root meristem, shoot apical meristem (SAM), intercalary meristem, floral meristem, embryo and tip of the coleoptile before true leaf emergence.

It localises to the nucleus. It catalyses the reaction N-[(R)-4-phosphopantothenoyl]-L-cysteine + H(+) = (R)-4'-phosphopantetheine + CO2. The protein operates within cofactor biosynthesis; coenzyme A biosynthesis; CoA from (R)-pantothenate: step 3/5. In terms of biological role, catalyzes the decarboxylation of 4'-phosphopantothenoylcysteine to 4'-phosphopantetheine, a key step in coenzyme A biosynthesis. Involved in salt and osmotic tolerance, and light-regulated plant growth. Trimerization of HAL3 recruits and activates the E3 ubiquitin-protein ligase HIP1, which leads to the degradation of cell cycle suppressors, resulting in enhancement of cell division and plant growth. HAL3 function in cell division seems to be independent from its PPC decarboxylase activity. Acts as a positive regulator of flowering by binding to HD1 in the dark. The sequence is that of Phosphopantothenoylcysteine decarboxylase from Oryza sativa subsp. japonica (Rice).